Reading from the N-terminus, the 149-residue chain is D-aminoacyl-tRNA deacylase (149 aa).

The Gly-cisPro motif, important for rejection of L-amino acids signature appears at 137-138 (GP).

It belongs to the DTD family. In terms of assembly, homodimer.

It is found in the cytoplasm. The catalysed reaction is glycyl-tRNA(Ala) + H2O = tRNA(Ala) + glycine + H(+). It catalyses the reaction a D-aminoacyl-tRNA + H2O = a tRNA + a D-alpha-amino acid + H(+). An aminoacyl-tRNA editing enzyme that deacylates mischarged D-aminoacyl-tRNAs. Also deacylates mischarged glycyl-tRNA(Ala), protecting cells against glycine mischarging by AlaRS. Acts via tRNA-based rather than protein-based catalysis; rejects L-amino acids rather than detecting D-amino acids in the active site. By recycling D-aminoacyl-tRNA to D-amino acids and free tRNA molecules, this enzyme counteracts the toxicity associated with the formation of D-aminoacyl-tRNA entities in vivo and helps enforce protein L-homochirality. The polypeptide is D-aminoacyl-tRNA deacylase (Alkaliphilus metalliredigens (strain QYMF)).